A 293-amino-acid polypeptide reads, in one-letter code: Large ribosomal subunit protein uL2c (293 aa).

The tract at residues 224–245 is disordered; the sequence is VMNPVDHPHGGGEGKSPIGRAR.

It belongs to the universal ribosomal protein uL2 family. Part of the 50S ribosomal subunit.

It localises to the plastid. It is found in the chloroplast. In Pyropia yezoensis (Susabi-nori), this protein is Large ribosomal subunit protein uL2c (rpl2).